A 266-amino-acid chain; its full sequence is Type III pantothenate kinase (266 aa).

9–16 contacts ATP; sequence DAGNSRIK. Substrate-binding positions include tyrosine 96 and 103 to 106; that span reads GSDR. Residue aspartate 105 is the Proton acceptor of the active site. Threonine 129 contributes to the ATP binding site. Threonine 189 contributes to the substrate binding site.

This sequence belongs to the type III pantothenate kinase family. In terms of assembly, homodimer. Requires NH4(+) as cofactor. The cofactor is K(+).

It is found in the cytoplasm. It carries out the reaction (R)-pantothenate + ATP = (R)-4'-phosphopantothenate + ADP + H(+). It functions in the pathway cofactor biosynthesis; coenzyme A biosynthesis; CoA from (R)-pantothenate: step 1/5. Catalyzes the phosphorylation of pantothenate (Pan), the first step in CoA biosynthesis. The chain is Type III pantothenate kinase from Burkholderia cenocepacia (strain ATCC BAA-245 / DSM 16553 / LMG 16656 / NCTC 13227 / J2315 / CF5610) (Burkholderia cepacia (strain J2315)).